We begin with the raw amino-acid sequence, 254 residues long: Pyrroloquinoline-quinone synthase (254 aa).

This sequence belongs to the PqqC family.

The catalysed reaction is 6-(2-amino-2-carboxyethyl)-7,8-dioxo-1,2,3,4,7,8-hexahydroquinoline-2,4-dicarboxylate + 3 O2 = pyrroloquinoline quinone + 2 H2O2 + 2 H2O + H(+). It participates in cofactor biosynthesis; pyrroloquinoline quinone biosynthesis. Ring cyclization and eight-electron oxidation of 3a-(2-amino-2-carboxyethyl)-4,5-dioxo-4,5,6,7,8,9-hexahydroquinoline-7,9-dicarboxylic-acid to PQQ. This is Pyrroloquinoline-quinone synthase from Rhodopseudomonas palustris (strain ATCC BAA-98 / CGA009).